A 687-amino-acid chain; its full sequence is Putative mitochondrial carnitine O-acetyltransferase (687 aa).

Catalysis depends on His-346, which acts as the Proton acceptor. 446–459 (GASHIKTVFKCSPD) contacts CoA. Residues Tyr-481 and Thr-494 each contribute to the (R)-carnitine site. The residue at position 517 (Ser-517) is a Phosphoserine.

This sequence belongs to the carnitine/choline acetyltransferase family.

It localises to the mitochondrion inner membrane. It catalyses the reaction (R)-carnitine + acetyl-CoA = O-acetyl-(R)-carnitine + CoA. Functionally, involved in the transfer of acetyl-CoA into mitochondria. May also be involved in the metabolism of acetate and of ethanol. This chain is Putative mitochondrial carnitine O-acetyltransferase (YAT1), found in Saccharomyces cerevisiae (strain ATCC 204508 / S288c) (Baker's yeast).